The following is a 106-amino-acid chain: L-rhamnose mutarotase (106 aa).

Tyrosine 20 lines the substrate pocket. The active-site Proton donor is histidine 24. Substrate contacts are provided by residues tyrosine 43 and 78 to 79 (WW).

It belongs to the rhamnose mutarotase family. Homodimer.

Its subcellular location is the cytoplasm. The enzyme catalyses alpha-L-rhamnose = beta-L-rhamnose. It participates in carbohydrate metabolism; L-rhamnose metabolism. In terms of biological role, involved in the anomeric conversion of L-rhamnose. The polypeptide is L-rhamnose mutarotase (Brucella anthropi (strain ATCC 49188 / DSM 6882 / CCUG 24695 / JCM 21032 / LMG 3331 / NBRC 15819 / NCTC 12168 / Alc 37) (Ochrobactrum anthropi)).